We begin with the raw amino-acid sequence, 101 residues long: uncharacterized protein (101 aa).

The next 2 helical transmembrane spans lie at 52–72 (VVFI…VKLL) and 75–95 (LWRL…SLLG).

It is found in the endoplasmic reticulum membrane. This is an uncharacterized protein from Schizosaccharomyces pombe (strain 972 / ATCC 24843) (Fission yeast).